Reading from the N-terminus, the 447-residue chain is ATP-dependent protease ATPase subunit HslU (447 aa).

Residues I17, 59-64 (GVGKTE), D256, E321, and R393 each bind ATP.

This sequence belongs to the ClpX chaperone family. HslU subfamily. As to quaternary structure, a double ring-shaped homohexamer of HslV is capped on each side by a ring-shaped HslU homohexamer. The assembly of the HslU/HslV complex is dependent on binding of ATP.

The protein localises to the cytoplasm. ATPase subunit of a proteasome-like degradation complex; this subunit has chaperone activity. The binding of ATP and its subsequent hydrolysis by HslU are essential for unfolding of protein substrates subsequently hydrolyzed by HslV. HslU recognizes the N-terminal part of its protein substrates and unfolds these before they are guided to HslV for hydrolysis. The sequence is that of ATP-dependent protease ATPase subunit HslU from Pseudomonas putida (strain ATCC 47054 / DSM 6125 / CFBP 8728 / NCIMB 11950 / KT2440).